A 642-amino-acid polypeptide reads, in one-letter code: Threonine--tRNA ligase (642 aa).

Residues 1 to 61 (MPVITLPDGS…ENDATLAIIT (61 aa)) form the TGS domain. Positions 243-534 (DHRKIGKQLD…LTEEFAGFFP (292 aa)) are catalytic. Residues Cys334, His385, and His511 each coordinate Zn(2+).

The protein belongs to the class-II aminoacyl-tRNA synthetase family. In terms of assembly, homodimer. Zn(2+) is required as a cofactor.

The protein localises to the cytoplasm. The catalysed reaction is tRNA(Thr) + L-threonine + ATP = L-threonyl-tRNA(Thr) + AMP + diphosphate + H(+). Functionally, catalyzes the attachment of threonine to tRNA(Thr) in a two-step reaction: L-threonine is first activated by ATP to form Thr-AMP and then transferred to the acceptor end of tRNA(Thr). Also edits incorrectly charged L-seryl-tRNA(Thr). The protein is Threonine--tRNA ligase of Salmonella choleraesuis (strain SC-B67).